Here is a 177-residue protein sequence, read N- to C-terminus: Large ribosomal subunit protein uL6 (177 aa).

Belongs to the universal ribosomal protein uL6 family. As to quaternary structure, part of the 50S ribosomal subunit.

Functionally, this protein binds to the 23S rRNA, and is important in its secondary structure. It is located near the subunit interface in the base of the L7/L12 stalk, and near the tRNA binding site of the peptidyltransferase center. This chain is Large ribosomal subunit protein uL6, found in Rickettsia rickettsii (strain Iowa).